The following is a 288-amino-acid chain: Male determiner protein Nix (288 aa).

RRM domains are found at residues 19 to 94, 108 to 179, and 205 to 282; these read YCIY…LPLS, IVVY…KVER, and RSIG…FVPE.

In terms of biological role, male determiner protein (M-factor) that controls male somatic sexual differentiation. Acts as a dominant factor that regulates the mRNA splicing of doublesex (dsx) or fruitless (fru) transcripts and promotes expression of male splice forms of dsx and fru. The sequence is that of Male determiner protein Nix from Aedes aegypti (Yellowfever mosquito).